We begin with the raw amino-acid sequence, 754 residues long: MELEEEENPRKRKETPNSALTTELDRPSWDVQDPEPQAKKARLSTILFTDNCEVTHRQLCELLKYAILGKSTLPKPSWCQLLHQKQLNNVVVFILKGMSQLHFYRFYLEFRFLRKTFRHKFSLPPPTSSFLFDIIGLQKKKSARGCPRTVEGPLISATLKSSIDLQNDPIIQKYGYKNVSLTRCLLTKEEMKTFHFPLQGSPNCENFILLKYSGFITDSSPLFGLDCEVCLTSMGKELTRISLVAEGGYCLMDELVKPDFKILDYLTSFSGITKEILNPVTTKLKDVQKLLRELLPPDAVLVGHCLDLDLRVLKIIHPYVIDTSLLYIGKQGRRFKLTFLAKVILGKDIQCPNKLGHDGIEDARTALELVQYFLKYGPKKIAEFNLEALAANQEQGNKEGATHMRSVLECLDSMGQKLLFLTQDIDELSSYRNCQTVKCSSNKEVLEQARVEVPLFPFNIVQFSFRPFPPLFAEEMKNNMKTRWTEMSTIYAGPFSKDCNVGSLKKVFSSLGPVQSITLVLETYRPYFSIQYELLEAAQLAIETMNGTILEGSCIRVHRLLTELTLECDTLVRELEQDSENQGTIYVAGIGETFKEHLLEQSNLFPDLEAVILPKELKSRKQKNYCFLKFKTFNSAQVALEVLKGKDWKLKGRNALTSRHLQAWLKNIHPEPSMPMGLRIVPPLLERHIFRTLKANHPKIVAWRWSRRIEKLYHSLSPGTFCLILLPGTKNTFGSHPGLGLMKIKEEEGGDTLL.

The segment at 1 to 36 (MELEEEENPRKRKETPNSALTTELDRPSWDVQDPEP) is disordered. An Exonuclease domain is found at 222-370 (LFGLDCEVCL…EDARTALELV (149 aa)). 2 consecutive RRM domains span residues 488 to 562 (STIY…RLLT) and 583 to 662 (GTIY…RHLQ).

This chain is RNA exonuclease 5 (Rexo5), found in Rattus norvegicus (Rat).